The primary structure comprises 152 residues: Protein Turandot X (152 aa).

A signal peptide spans 1–22; that stretch reads MGFYISSLLICVFLGIVRFASA.

The protein belongs to the Turandot family.

It is found in the secreted. In terms of biological role, a humoral factor that may play a role in stress tolerance. The sequence is that of Protein Turandot X from Drosophila erecta (Fruit fly).